The following is a 57-amino-acid chain: Large ribosomal subunit protein bL32 (57 aa).

It belongs to the bacterial ribosomal protein bL32 family.

The sequence is that of Large ribosomal subunit protein bL32 from Ureaplasma parvum serovar 3 (strain ATCC 27815 / 27 / NCTC 11736).